A 293-amino-acid chain; its full sequence is Ribosomal protein L11 methyltransferase (293 aa).

4 residues coordinate S-adenosyl-L-methionine: Thr-145, Gly-166, Asp-188, and Asn-230.

This sequence belongs to the methyltransferase superfamily. PrmA family.

It is found in the cytoplasm. The enzyme catalyses L-lysyl-[protein] + 3 S-adenosyl-L-methionine = N(6),N(6),N(6)-trimethyl-L-lysyl-[protein] + 3 S-adenosyl-L-homocysteine + 3 H(+). Methylates ribosomal protein L11. The protein is Ribosomal protein L11 methyltransferase of Shewanella woodyi (strain ATCC 51908 / MS32).